The primary structure comprises 229 residues: Large ribosomal subunit protein uL1 (229 aa).

The protein belongs to the universal ribosomal protein uL1 family. In terms of assembly, part of the 50S ribosomal subunit.

Binds directly to 23S rRNA. The L1 stalk is quite mobile in the ribosome, and is involved in E site tRNA release. In terms of biological role, protein L1 is also a translational repressor protein, it controls the translation of the L11 operon by binding to its mRNA. This Actinobacillus pleuropneumoniae serotype 5b (strain L20) protein is Large ribosomal subunit protein uL1.